The sequence spans 252 residues: Probable phosphatase SO_1652 (252 aa).

Positions 8, 10, 16, 41, 74, 102, 132, 193, and 195 each coordinate Zn(2+).

This sequence belongs to the PHP family. Zn(2+) serves as cofactor.

This chain is Probable phosphatase SO_1652, found in Shewanella oneidensis (strain ATCC 700550 / JCM 31522 / CIP 106686 / LMG 19005 / NCIMB 14063 / MR-1).